A 120-amino-acid polypeptide reads, in one-letter code: UPF0231 protein YacL (120 aa).

Belongs to the UPF0231 family.

This chain is UPF0231 protein YacL (yacL), found in Shigella flexneri.